The following is a 240-amino-acid chain: Transmembrane protein 65 (240 aa).

The N-terminal 61 residues, 1 to 61 (MSRLLPLLRS…RRLGTHPKKE (61 aa)), are a transit peptide targeting the mitochondrion. The Cytoplasmic portion of the chain corresponds to 62 to 110 (PMEALNTAQGARDFIYSLHSTERSCLLKELHRFESIAIAQEKLEAPPPT). The helical transmembrane segment at 111–131 (PGQLRYVFIHNAIPFIGFGFL) threads the bilayer. Topologically, residues 132–142 (DNAIMIVAGTH) are extracellular. A helical membrane pass occupies residues 143–165 (IEMSIGIILGISTMAAAALGNLV). Over 166-209 (SDLAGLGLAGYVEALASRLGLSIPDLTPKQVDMWQTRLSTHLGK) the chain is Cytoplasmic. The helical transmembrane segment at 210-230 (AVGVTIGCILGMFPLIFFGGG) threads the bilayer. Residues 231–240 (EEDEKLETKS) are Extracellular-facing.

Monomer. Homodimer. Interacts with GJA1. Interacts weakly with DSP. Interacts with SCN1B. As to expression, predominantly expressed the ventricular tissue (at protein level).

Its subcellular location is the cell membrane. It is found in the mitochondrion inner membrane. Functionally, essential for maintaining proper cardiac intercalated disk (ICD) structure and function as well as cardiac conduction velocity in the heart. Its association with SCN1B is required for stabilizing the perinexus in the ICD and for localization of GJA1 and SCN5A to the ICD. May regulate the function of the gap junction protein GJA1 and may contribute to the stability and proper localization of GJA1 to cardiac intercalated disk thereby regulating gap junction communication. May also play a role in the regulation of mitochondrial respiration and mitochondrial DNA copy number maintenance. This Homo sapiens (Human) protein is Transmembrane protein 65 (TMEM65).